The primary structure comprises 141 residues: Ly6/PLAUR domain-containing protein 1 (141 aa).

The N-terminal stretch at 1–20 (MWVLGIAATFCGLFWLPGLA) is a signal peptide. Intrachain disulfides connect cysteine 25–cysteine 54, cysteine 28–cysteine 37, cysteine 46–cysteine 71, cysteine 77–cysteine 100, cysteine 88–cysteine 97, and cysteine 101–cysteine 106. The UPAR/Ly6 domain maps to 25–107 (CYQCEEFQLN…ISCCNTPLCN (83 aa)). N-linked (GlcNAc...) asparagine glycosylation is present at asparagine 45. The GPI-anchor amidated glycine moiety is linked to residue glycine 115. Positions 116–141 (SSASAIRPGLLTTLLFFHLALCLAHC) are cleaved as a propeptide — removed in mature form.

In terms of assembly, interacts with CHRNA4 and nAChRs containing alpha-4:beta-2 (CHRNA4:CHRNB2) and alpha-7 (CHRNA7) subunits. In terms of tissue distribution, preferentially expressed in the nervous system. Expressed in embryonic and postnatal postmitotic central and peripheral neurons including subpopulations of motor neurons, sensory neurons, interneurons and neurons of the autonomous nervous system. Expressed around the growing nerves in the limb bud. Expressed at high levels in specific brain regions such as the prefrontal cortex, amygdala, hippocampus, mediodorsal thalamus, dentate gyrus and specific brainstem nuclei (at protein level).

It localises to the cell membrane. Its function is as follows. Believed to act as a modulator of nicotinic acetylcholine receptors (nAChRs) activity. In vitro increases receptor desensitization and decreases affinity for ACh of alpha-4:beta-2-containing nAChRs. May play a role in the intracellular trafficking of alpha-4:beta-2 and alpha-7-containing nAChRs and may inhibit their expression at the cell surface. May be involved in the control of anxiety. The sequence is that of Ly6/PLAUR domain-containing protein 1 (Lypd1) from Mus musculus (Mouse).